Consider the following 407-residue polypeptide: Shaggy-related protein kinase iota (407 aa).

A compositionally biased stretch (low complexity) spans 1-19 (MASLPLGPQPHALAPPLQL). The segment at 1 to 23 (MASLPLGPQPHALAPPLQLHDGD) is disordered. Alanine 2 carries the N-acetylalanine modification. In terms of domain architecture, Protein kinase spans 70 to 354 (YMAERVVGTG…ALEACAHPFF (285 aa)). ATP contacts are provided by residues 76-84 (VGTGSFGIV) and lysine 99. Catalysis depends on aspartate 195, which acts as the Proton acceptor. Tyrosine 230 is subject to Phosphotyrosine.

The protein belongs to the protein kinase superfamily. CMGC Ser/Thr protein kinase family. GSK-3 subfamily. In terms of assembly, binds to KIB1. Interacts with BSK6. Autophosphorylated mainly on threonine and serine residues.

The catalysed reaction is L-seryl-[protein] + ATP = O-phospho-L-seryl-[protein] + ADP + H(+). The enzyme catalyses L-threonyl-[protein] + ATP = O-phospho-L-threonyl-[protein] + ADP + H(+). Functionally, phosphorylates BSK1, BSK3, BSK5, BSK6, BSK8 and BSK11 in vitro. May mediate extracellular signals to regulate transcription in differentiating cells. In Arabidopsis thaliana (Mouse-ear cress), this protein is Shaggy-related protein kinase iota (ASK9).